A 424-amino-acid polypeptide reads, in one-letter code: UDP-N-acetylglucosamine 1-carboxyvinyltransferase (424 aa).

A phosphoenolpyruvate-binding site is contributed by K22–N23. R93 serves as a coordination point for UDP-N-acetyl-alpha-D-glucosamine. C117 functions as the Proton donor in the catalytic mechanism. Position 117 is a 2-(S-cysteinyl)pyruvic acid O-phosphothioketal (C117). UDP-N-acetyl-alpha-D-glucosamine-binding positions include R122 to L126, S164 to G166, D307, and I329.

It belongs to the EPSP synthase family. MurA subfamily.

The protein localises to the cytoplasm. The catalysed reaction is phosphoenolpyruvate + UDP-N-acetyl-alpha-D-glucosamine = UDP-N-acetyl-3-O-(1-carboxyvinyl)-alpha-D-glucosamine + phosphate. It functions in the pathway cell wall biogenesis; peptidoglycan biosynthesis. In terms of biological role, cell wall formation. Adds enolpyruvyl to UDP-N-acetylglucosamine. The polypeptide is UDP-N-acetylglucosamine 1-carboxyvinyltransferase (Haemophilus influenzae (strain ATCC 51907 / DSM 11121 / KW20 / Rd)).